The following is a 416-amino-acid chain: 4-hydroxy-3-methylbut-2-en-1-yl diphosphate synthase (flavodoxin) (416 aa).

[4Fe-4S] cluster contacts are provided by Cys-304, Cys-307, Cys-350, and Glu-357.

Belongs to the IspG family. [4Fe-4S] cluster serves as cofactor.

The catalysed reaction is (2E)-4-hydroxy-3-methylbut-2-enyl diphosphate + oxidized [flavodoxin] + H2O + 2 H(+) = 2-C-methyl-D-erythritol 2,4-cyclic diphosphate + reduced [flavodoxin]. It participates in isoprenoid biosynthesis; isopentenyl diphosphate biosynthesis via DXP pathway; isopentenyl diphosphate from 1-deoxy-D-xylulose 5-phosphate: step 5/6. Its function is as follows. Converts 2C-methyl-D-erythritol 2,4-cyclodiphosphate (ME-2,4cPP) into 1-hydroxy-2-methyl-2-(E)-butenyl 4-diphosphate. The protein is 4-hydroxy-3-methylbut-2-en-1-yl diphosphate synthase (flavodoxin) of Rhizobium johnstonii (strain DSM 114642 / LMG 32736 / 3841) (Rhizobium leguminosarum bv. viciae).